A 312-amino-acid chain; its full sequence is Serpentine receptor class gamma-31 (312 aa).

7 consecutive transmembrane segments (helical) span residues 6–26 (LITQ…TVVF), 38–58 (FLKL…NFYI), 92–112 (FIFC…LTSI), 132–152 (TYIL…PLLV), 180–200 (FILV…IICW), 218–238 (LFLV…IAML), and 259–279 (LLSP…LIIF).

It belongs to the nematode receptor-like protein srg family.

It localises to the membrane. The polypeptide is Serpentine receptor class gamma-31 (srg-31) (Caenorhabditis elegans).